The following is a 487-amino-acid chain: Steroid 21-hydroxylase (487 aa).

Heme b is bound by residues Arg-92 and Lys-117. 17alpha-hydroxyprogesterone is bound at residue Arg-228. A progesterone-binding site is contributed by Arg-228. His-357, Arg-418, and Cys-420 together coordinate heme b.

The protein belongs to the cytochrome P450 family. The cofactor is heme b.

The protein localises to the endoplasmic reticulum membrane. It localises to the microsome membrane. It catalyses the reaction progesterone + reduced [NADPH--hemoprotein reductase] + O2 = 21-hydroxyprogesterone + oxidized [NADPH--hemoprotein reductase] + H2O + H(+). The catalysed reaction is 17alpha-hydroxyprogesterone + reduced [NADPH--hemoprotein reductase] + O2 = 11-deoxycortisol + oxidized [NADPH--hemoprotein reductase] + H2O + H(+). In terms of biological role, a cytochrome P450 monooxygenase that plays a major role in adrenal steroidogenesis. Catalyzes the hydroxylation at C-21 of progesterone and 17alpha-hydroxyprogesterone to respectively form 11-deoxycorticosterone and 11-deoxycortisol, intermediate metabolites in the biosynthetic pathway of mineralocorticoids and glucocorticoids. Mechanistically, uses molecular oxygen inserting one oxygen atom into a substrate, and reducing the second into a water molecule, with two electrons provided by NADPH via cytochrome P450 reductase (CPR; NADPH-ferrihemoprotein reductase). This is Steroid 21-hydroxylase (Cyp21) from Mus musculus (Mouse).